The chain runs to 190 residues: Holliday junction branch migration complex subunit RuvA (190 aa).

The segment at 1-65 is domain I; it reads MIGNLRGIVD…ENVTQLYGFI (65 aa). The segment at 66–143 is domain II; it reads SKEEQQCLRL…KLEINNNHFH (78 aa). The flexible linker stretch occupies residues 144–147; that stretch reads SISE. Residues 147-190 are domain III; it reads EDALSALINLGYERTKAYDTIKKIEDESPNLDTKDIIRMALKTI.

The protein belongs to the RuvA family. In terms of assembly, homotetramer. Forms an RuvA(8)-RuvB(12)-Holliday junction (HJ) complex. HJ DNA is sandwiched between 2 RuvA tetramers; dsDNA enters through RuvA and exits via RuvB. An RuvB hexamer assembles on each DNA strand where it exits the tetramer. Each RuvB hexamer is contacted by two RuvA subunits (via domain III) on 2 adjacent RuvB subunits; this complex drives branch migration. In the full resolvosome a probable DNA-RuvA(4)-RuvB(12)-RuvC(2) complex forms which resolves the HJ.

The protein localises to the cytoplasm. Its function is as follows. The RuvA-RuvB-RuvC complex processes Holliday junction (HJ) DNA during genetic recombination and DNA repair, while the RuvA-RuvB complex plays an important role in the rescue of blocked DNA replication forks via replication fork reversal (RFR). RuvA specifically binds to HJ cruciform DNA, conferring on it an open structure. The RuvB hexamer acts as an ATP-dependent pump, pulling dsDNA into and through the RuvAB complex. HJ branch migration allows RuvC to scan DNA until it finds its consensus sequence, where it cleaves and resolves the cruciform DNA. In Wolbachia pipientis subsp. Culex pipiens (strain wPip), this protein is Holliday junction branch migration complex subunit RuvA.